A 364-amino-acid chain; its full sequence is Heat-inducible transcription repressor HrcA (364 aa).

The protein belongs to the HrcA family.

Negative regulator of class I heat shock genes (grpE-dnaK-dnaJ and groELS operons). Prevents heat-shock induction of these operons. This is Heat-inducible transcription repressor HrcA from Cyanothece sp. (strain PCC 7425 / ATCC 29141).